A 177-amino-acid chain; its full sequence is ATP synthase subunit delta (177 aa).

The protein belongs to the ATPase delta chain family. F-type ATPases have 2 components, F(1) - the catalytic core - and F(0) - the membrane proton channel. F(1) has five subunits: alpha(3), beta(3), gamma(1), delta(1), epsilon(1). F(0) has three main subunits: a(1), b(2) and c(10-14). The alpha and beta chains form an alternating ring which encloses part of the gamma chain. F(1) is attached to F(0) by a central stalk formed by the gamma and epsilon chains, while a peripheral stalk is formed by the delta and b chains.

It localises to the cell inner membrane. F(1)F(0) ATP synthase produces ATP from ADP in the presence of a proton or sodium gradient. F-type ATPases consist of two structural domains, F(1) containing the extramembraneous catalytic core and F(0) containing the membrane proton channel, linked together by a central stalk and a peripheral stalk. During catalysis, ATP synthesis in the catalytic domain of F(1) is coupled via a rotary mechanism of the central stalk subunits to proton translocation. Its function is as follows. This protein is part of the stalk that links CF(0) to CF(1). It either transmits conformational changes from CF(0) to CF(1) or is implicated in proton conduction. This chain is ATP synthase subunit delta, found in Vibrio cholerae serotype O1 (strain ATCC 39541 / Classical Ogawa 395 / O395).